The sequence spans 238 residues: Orotidine 5'-phosphate decarboxylase (238 aa).

Substrate-binding positions include D10, K32, 59–68, T122, R184, Q193, G213, and R214; that span reads DLKLHDIPNT. The Proton donor role is filled by K61.

The protein belongs to the OMP decarboxylase family. Type 1 subfamily. In terms of assembly, homodimer.

It catalyses the reaction orotidine 5'-phosphate + H(+) = UMP + CO2. The protein operates within pyrimidine metabolism; UMP biosynthesis via de novo pathway; UMP from orotate: step 2/2. In terms of biological role, catalyzes the decarboxylation of orotidine 5'-monophosphate (OMP) to uridine 5'-monophosphate (UMP). The protein is Orotidine 5'-phosphate decarboxylase of Bacillus cereus (strain Q1).